Consider the following 756-residue polypeptide: 5-methyltetrahydropteroyltriglutamate--homocysteine methyltransferase (756 aa).

5-methyltetrahydropteroyltri-L-glutamate contacts are provided by residues 16–19 (RELK) and K112. L-homocysteine-binding positions include 432–434 (IGS) and E485. Residues 432 to 434 (IGS) and E485 each bind L-methionine. Residues 516–517 (RC) and W562 each bind 5-methyltetrahydropteroyltri-L-glutamate. Position 600 (D600) interacts with L-homocysteine. D600 contacts L-methionine. E606 contributes to the 5-methyltetrahydropteroyltri-L-glutamate binding site. Zn(2+)-binding residues include H642, C644, and E666. H695 serves as the catalytic Proton donor. C727 lines the Zn(2+) pocket.

The protein belongs to the vitamin-B12 independent methionine synthase family. It depends on Zn(2+) as a cofactor.

The enzyme catalyses 5-methyltetrahydropteroyltri-L-glutamate + L-homocysteine = tetrahydropteroyltri-L-glutamate + L-methionine. It functions in the pathway amino-acid biosynthesis; L-methionine biosynthesis via de novo pathway; L-methionine from L-homocysteine (MetE route): step 1/1. Its function is as follows. Catalyzes the transfer of a methyl group from 5-methyltetrahydrofolate to homocysteine resulting in methionine formation. This is 5-methyltetrahydropteroyltriglutamate--homocysteine methyltransferase from Haemophilus influenzae (strain PittEE).